A 121-amino-acid chain; its full sequence is Small ribosomal subunit protein uS13 (121 aa).

Residues 97 to 121 (VRGQRTRTNARTRRGARKTVAGKKK) are disordered. Residues 100–121 (QRTRTNARTRRGARKTVAGKKK) show a composition bias toward basic residues.

It belongs to the universal ribosomal protein uS13 family. Part of the 30S ribosomal subunit. Forms a loose heterodimer with protein S19. Forms two bridges to the 50S subunit in the 70S ribosome.

Its function is as follows. Located at the top of the head of the 30S subunit, it contacts several helices of the 16S rRNA. In the 70S ribosome it contacts the 23S rRNA (bridge B1a) and protein L5 of the 50S subunit (bridge B1b), connecting the 2 subunits; these bridges are implicated in subunit movement. Contacts the tRNAs in the A and P-sites. This is Small ribosomal subunit protein uS13 from Synechococcus sp. (strain WH7803).